The chain runs to 273 residues: NADPH-dependent 7-cyano-7-deazaguanine reductase (273 aa).

81–83 (VES) is a substrate binding site. Residue 83–84 (SK) participates in NADPH binding. The Thioimide intermediate role is filled by Cys-179. Asp-186 functions as the Proton donor in the catalytic mechanism. Position 218 to 219 (218 to 219 (AE)) interacts with substrate. 247-248 (RG) lines the NADPH pocket.

It belongs to the GTP cyclohydrolase I family. QueF type 2 subfamily. As to quaternary structure, homodimer.

The protein localises to the cytoplasm. It catalyses the reaction 7-aminomethyl-7-carbaguanine + 2 NADP(+) = 7-cyano-7-deazaguanine + 2 NADPH + 3 H(+). Its pathway is tRNA modification; tRNA-queuosine biosynthesis. Its function is as follows. Catalyzes the NADPH-dependent reduction of 7-cyano-7-deazaguanine (preQ0) to 7-aminomethyl-7-deazaguanine (preQ1). This is NADPH-dependent 7-cyano-7-deazaguanine reductase from Rickettsia massiliae (strain Mtu5).